Reading from the N-terminus, the 342-residue chain is tRNA N6-adenosine threonylcarbamoyltransferase (342 aa).

Fe cation is bound by residues histidine 111 and histidine 115. Substrate is bound by residues 134–138, aspartate 167, glycine 180, and asparagine 272; that span reads LVSGG. Aspartate 300 provides a ligand contact to Fe cation.

This sequence belongs to the KAE1 / TsaD family. It depends on Fe(2+) as a cofactor.

It localises to the cytoplasm. The catalysed reaction is L-threonylcarbamoyladenylate + adenosine(37) in tRNA = N(6)-L-threonylcarbamoyladenosine(37) in tRNA + AMP + H(+). Its function is as follows. Required for the formation of a threonylcarbamoyl group on adenosine at position 37 (t(6)A37) in tRNAs that read codons beginning with adenine. Is involved in the transfer of the threonylcarbamoyl moiety of threonylcarbamoyl-AMP (TC-AMP) to the N6 group of A37, together with TsaE and TsaB. TsaD likely plays a direct catalytic role in this reaction. This chain is tRNA N6-adenosine threonylcarbamoyltransferase, found in Aromatoleum aromaticum (strain DSM 19018 / LMG 30748 / EbN1) (Azoarcus sp. (strain EbN1)).